Consider the following 633-residue polypeptide: Probable potassium transport system protein Kup (633 aa).

A run of 12 helical transmembrane segments spans residues 21-41, 61-81, 107-127, 145-165, 176-196, 219-239, 255-275, 293-313, 345-365, 371-391, 402-422, and 427-447; these read LAVG…LYAF, LVSL…VLFL, TAVL…DAMI, PTLS…LFAI, FFGP…IMHI, GFLG…AEAL, WFVL…ALVL, ALLP…QAVI, IFLP…VLSF, LATA…IMAF, LPMA…FLGA, and IHDG…IMWT.

This sequence belongs to the HAK/KUP transporter (TC 2.A.72) family.

The protein localises to the cell inner membrane. It catalyses the reaction K(+)(in) + H(+)(in) = K(+)(out) + H(+)(out). Its function is as follows. Transport of potassium into the cell. Likely operates as a K(+):H(+) symporter. The sequence is that of Probable potassium transport system protein Kup from Rhizobium rhizogenes (strain K84 / ATCC BAA-868) (Agrobacterium radiobacter).